A 551-amino-acid polypeptide reads, in one-letter code: RCC1 and BTB domain-containing protein 2 (551 aa).

6 RCC1 repeats span residues 64-115, 117-169, 171-222, 223-274, 276-326, and 328-382; these read NDEI…VLAT, DGEV…VLTS, GEVF…AVVD, TGEV…VLTD, GQIY…AAKT, and GGHV…TVAE. In terms of domain architecture, BTB spans 394 to 457; the sequence is ADLKFLVDGK…LYTDNISLSP (64 aa).

In terms of tissue distribution, expressed in testis and heart (at protein level).

It is found in the cytoplasmic vesicle. It localises to the secretory vesicle. The protein localises to the acrosome. In Mus musculus (Mouse), this protein is RCC1 and BTB domain-containing protein 2 (Rcbtb2).